The chain runs to 282 residues: Parvulin-like PPIase (282 aa).

An N-terminal signal peptide occupies residues 1-20 (MKKLSVIFLSVSMLSGIAFA). Residues 138 to 231 (KEQIKVAHIL…FGWHIIKVLE (94 aa)) enclose the PpiC domain.

The protein belongs to the PpiC/parvulin rotamase family.

The protein localises to the cell outer membrane. It carries out the reaction [protein]-peptidylproline (omega=180) = [protein]-peptidylproline (omega=0). This is Parvulin-like PPIase (plp) from Rickettsia felis (strain ATCC VR-1525 / URRWXCal2) (Rickettsia azadi).